Consider the following 209-residue polypeptide: Thymidylate kinase (209 aa).

7-14 serves as a coordination point for ATP; that stretch reads GVEGSGKS.

It belongs to the thymidylate kinase family.

It catalyses the reaction dTMP + ATP = dTDP + ADP. Phosphorylation of dTMP to form dTDP in both de novo and salvage pathways of dTTP synthesis. The polypeptide is Thymidylate kinase (Solidesulfovibrio magneticus (strain ATCC 700980 / DSM 13731 / RS-1) (Desulfovibrio magneticus)).